The sequence spans 785 residues: Sexual differentiation process protein isp4 (785 aa).

Positions 1 to 28 (MIGSINESPIEEHMNDSPSTKEKADSVD) are disordered. Residues 10–26 (IEEHMNDSPSTKEKADS) are compositionally biased toward basic and acidic residues. The next 16 helical transmembrane spans lie at 94–114 (MWTI…FFSL), 121–141 (LSVL…DLIF), 167–187 (LIVV…IILA), 196–216 (FGFG…YGLA), 264–284 (FFLY…YIFQ), 339–359 (LMNI…ALNF), 413–433 (ALAF…VILY), 461–481 (VPFY…MGTI), 490–510 (WWVI…IGIV), 512–532 (AITN…GYMY), 537–557 (LAMM…LAFA), 572–592 (IMFY…IGVL), 611–631 (YTCP…VIGP), 642–662 (TGLQ…WALW), 683–703 (GYIP…GLFF), and 732–752 (LSVI…PDWW).

It belongs to the oligopeptide OPT transporter family.

The protein resides in the endoplasmic reticulum membrane. The sequence is that of Sexual differentiation process protein isp4 (isp4) from Schizosaccharomyces pombe (strain 972 / ATCC 24843) (Fission yeast).